Consider the following 548-residue polypeptide: 5-epi-aristolochene synthase 3 (548 aa).

5 residues coordinate Mg(2+): Asp301, Asp305, Asp444, Thr448, and Glu452. Residues 301 to 305 (DDTFD) carry the DDXXD motif motif.

Belongs to the terpene synthase family. In terms of assembly, monomer. It depends on Mg(2+) as a cofactor. Expressed in roots, but not in shoots.

The protein resides in the cytoplasm. The enzyme catalyses (2E,6E)-farnesyl diphosphate = (+)-5-epi-aristolochene + diphosphate. It participates in secondary metabolite biosynthesis; terpenoid biosynthesis. Catalyzes the cyclization of trans,trans-farnesyl diphosphate (FPP) to the bicyclic intermediate 5-epi-aristolochene, initial step in the conversion of FPP to the sesquiterpenoid antifungal phytoalexin capsidiol. Produces germacrene A as an enzyme-bound intermediate that is not released by the enzyme, but is further cyclized to produce the bicyclic 5-epi-aristolochene. The protein is 5-epi-aristolochene synthase 3 of Nicotiana attenuata (Coyote tobacco).